We begin with the raw amino-acid sequence, 205 residues long: DNA-directed RNA polymerase RPB5 homolog (205 aa).

This sequence belongs to the archaeal RpoH/eukaryotic RPB5 RNA polymerase subunit family. As to quaternary structure, part of the viral DNA-directed RNA polymerase that consists of 8 polII-like subunits (RPB1, RPB2, RPB3, RPB5, RPB6, RPB7, RPB9, RPB10), a capping enzyme and a termination factor.

Its subcellular location is the host cytoplasm. The protein resides in the virion. In terms of biological role, component of the DNA-directed RNA polymerase (RNAP) that catalyzes the transcription in the cytoplasm of viral DNA into RNA using the four ribonucleoside triphosphates as substrates. The sequence is that of DNA-directed RNA polymerase RPB5 homolog from African swine fever virus (isolate Pig/Kenya/KEN-50/1950) (ASFV).